Reading from the N-terminus, the 1088-residue chain is Protocadherin-19 (1088 aa).

An N-terminal signal peptide occupies residues 1–24 (MHSKDMDFVQMFVCFLLCWTGVDA). At 25-678 (VFNLKYTVEE…QEQIGPVNLS (654 aa)) the chain is on the extracellular side. 6 consecutive Cadherin domains span residues 31-130 (TVEE…APRF), 131-239 (PTNH…NPVF), 240-347 (DEPV…APEI), 351-454 (SENS…PPYF), 455-563 (TKPH…TPVM), and 569-676 (VNGT…GPVN). Residues Glu34 and Glu35 each coordinate Ca(2+). An N-linked (GlcNAc...) asparagine glycan is attached at Asn44. Positions 89 and 91 each coordinate Ca(2+). The cysteines at positions 94 and 100 are disulfide-linked. Asp122, Val123, Asn124, Asp125, Asn126, Glu141, Asp156, Asp158, Asn162, Glu200, Asp213, Asp231, Ser232, Asn233, Asp234, Asn235, and Glu250 together coordinate Ca(2+). Asn262 is a glycosylation site (N-linked (GlcNAc...) asparagine). Residues Asp265, Asp267, and Asn271 each coordinate Ca(2+). The N-linked (GlcNAc...) asparagine glycan is linked to Asn284. Ca(2+) contacts are provided by Asp306, Glu308, Asp339, Ile340, Asn341, Asp342, Asn343, Glu361, and Asp376. A glycan (N-linked (GlcNAc...) asparagine) is linked at Asn377. Asp378, Asn382, Asp413, and Glu415 together coordinate Ca(2+). N-linked (GlcNAc...) asparagine glycosylation is present at Asn421. Positions 428, 446, 447, 448, 449, 450, 465, 480, 482, 486, 522, 524, and 537 each coordinate Ca(2+). N-linked (GlcNAc...) asparagine glycosylation occurs at Asn486. Residue Asn546 is glycosylated (N-linked (GlcNAc...) asparagine). Ca(2+)-binding residues include Asp555, Val556, Asn557, Asp558, and Asn559. A glycan (N-linked (GlcNAc...) asparagine) is linked at Asn570. Residues Asp594, Asp596, Asn600, and Asp646 each contribute to the Ca(2+) site. Asn676 is a glycosylation site (N-linked (GlcNAc...) asparagine). The helical transmembrane segment at 679 to 699 (LIFIIALGSIAVILFVTMIFV) threads the bilayer. Residues 700–1088 (AVKCKRDNKE…GSKRLKDIVL (389 aa)) are Cytoplasmic-facing. 4 disordered regions span residues 792–813 (NSRNAAPNHGYHHTFTGQGPQQ), 851–875 (DMEGNSLKDSGHEESDQTDSEHDVQ), 970–1032 (TFGK…ASST), and 1067–1088 (TLLQDGRDKESPGSKRLKDIVL). The segment covering 859–875 (DSGHEESDQTDSEHDVQ) has biased composition (basic and acidic residues). The span at 1071–1088 (DGRDKESPGSKRLKDIVL) shows a compositional bias: basic and acidic residues.

Homodimer; antiparallel. Interacts with cadherin cdh2; the interaction confers robust cell adhesion activity on pcdh19. In the embryo, strongly expressed in the developing nervous system. At 12 hours post fertilization (hpf), shows a segmental expression pattern in the anterior third of the neural keel with strong expression in the presumptive forebrain, cerebellum/rhombomere 1 and rhombomere 4. By 24 hpf, expressed widely in the brain and spinal cord with higher expression levels in the ventral telencephalon, dorsal and central thalamus, optic tectum, central tegmentum, cerebellum and dorsolateral regions of the hindbrain. As development proceeds, expression becomes restricted to the dorsal and/or lateral regions of the central nervous system. Not detected in the spinal cord of two- and three-day old embryos. Expressed in the eye primordium, developing retina, lens and otic vesicle. Expressed in the larval optic tectum at 4 days post-fertilization where it localizes in discrete columns of neurons. Expressed throughout the adult brain with strong expression in the ventromedial telencephalon, periventricular regions of the thalamus and anterior hypothalamus, stratum periventriculare of the optic tectum, dorsal tegmental nucleus, granular regions of the cerebellar body and valvula, and superficial layers of the facial and vagal lobes.

It localises to the cell membrane. Calcium-dependent cell-adhesion protein. Essential for the early stages of neurulation in the anterior neural plate. Shows little cell adhesion activity on its own but exhibits robust homophilic cell adhesion when in a complex with cadherin cdh2 and appears to mediate the adhesion while cdh2 acts as a cell adhesion cofactor in the complex. Functions with cdh2 to coordinate cell adhesion and cell movements during neurulation. Contributes to neural progenitor cell patterning with cdh2 by promoting homophilic cell interactions. Regulates the columnar organization of neurons in the optic tectum. This is Protocadherin-19 from Danio rerio (Zebrafish).